A 131-amino-acid chain; its full sequence is Translation initiation factor 5A (131 aa).

Lysine 37 carries the post-translational modification Hypusine.

This sequence belongs to the eIF-5A family.

Its subcellular location is the cytoplasm. In terms of biological role, functions by promoting the formation of the first peptide bond. The protein is Translation initiation factor 5A (eIF5A) of Methanococcus aeolicus (strain ATCC BAA-1280 / DSM 17508 / OCM 812 / Nankai-3).